A 224-amino-acid polypeptide reads, in one-letter code: Putative O-methyltransferase MLBr01075 (224 aa).

S-adenosyl-L-methionine is bound by residues Val51, Glu73, 75–76, Ser81, Asp99, and Ile100; that span reads GT. Asp147 serves as a coordination point for substrate. Asp149 contacts S-adenosyl-L-methionine.

It belongs to the class I-like SAM-binding methyltransferase superfamily. Cation-dependent O-methyltransferase family.

The polypeptide is Putative O-methyltransferase MLBr01075 (Mycobacterium leprae (strain Br4923)).